A 129-amino-acid chain; its full sequence is Small ribosomal subunit protein uS11 (129 aa).

This sequence belongs to the universal ribosomal protein uS11 family. Part of the 30S ribosomal subunit. Interacts with proteins S7 and S18. Binds to IF-3.

Located on the platform of the 30S subunit, it bridges several disparate RNA helices of the 16S rRNA. Forms part of the Shine-Dalgarno cleft in the 70S ribosome. The sequence is that of Small ribosomal subunit protein uS11 from Methylorubrum populi (strain ATCC BAA-705 / NCIMB 13946 / BJ001) (Methylobacterium populi).